The following is a 225-amino-acid chain: Ethylene-responsive transcription factor 3 (225 aa).

Residues 1–12 (MRRGRAAAAPAP) show a composition bias toward low complexity. 2 disordered regions span residues 1–29 (MRRG…IRFR) and 82–193 (NFPL…NIAS). Residues 27-84 (RFRGVRKRPWGRFAAEIRDPWKKTRVWLGTFDSAEDAARAYDAAARALRGPKAKTNFP) constitute a DNA-binding region (AP2/ERF). The segment covering 118-134 (SQRPTSSSMSSTVESFS) has biased composition (low complexity). Residues 176-185 (DHGDCEKEND) are compositionally biased toward basic and acidic residues. The EAR-like (transcriptional repression) motif lies at 202–208 (FDLNLPP).

Belongs to the ethylene-response factor family. Class 2 subfamily.

The protein resides in the nucleus. Its function is as follows. Transcription factor that binds to the GCC-box pathogenesis-related promoter element. Involved in the regulation of gene expression by stress factors and by components of stress signal transduction pathways. Probably acts as a transcriptional repressor and may regulate other AtERFs. This is Ethylene-responsive transcription factor 3 (ERF3) from Nicotiana tabacum (Common tobacco).